We begin with the raw amino-acid sequence, 975 residues long: Nesprin-3 (975 aa).

The Cytoplasmic portion of the chain corresponds to 1–925; the sequence is MTQQPQEDFE…PCSLLQKACR (925 aa). 2 Spectrin repeats span residues 220–325 and 647–740; these read QDHE…RLRG and REHC…QALR. The disordered stretch occupies residues 778–798; it reads LINPQDPIPRRQHGANPLEGH. The 59-residue stretch at 917–975 folds into the KASH domain; sequence CSLLQKACRVALPLQLLLLLFLLLLFLLPAGEEERSCALANNFARSFALMLRYNGPPPT. The helical; Anchor for type IV membrane protein transmembrane segment at 926–946 threads the bilayer; it reads VALPLQLLLLLFLLLLFLLPA. The Perinuclear space portion of the chain corresponds to 947 to 975; sequence GEEERSCALANNFARSFALMLRYNGPPPT.

This sequence belongs to the nesprin family. In terms of assembly, core component of LINC complexes which are composed of inner nuclear membrane SUN domain-containing proteins coupled to outer nuclear membrane KASH domain-containing nesprins. SUN and KASH domain-containing proteins seem to bind each other promiscuously; however, differentially expression of LINC complex constituents can give rise to specific assemblies. Interacts with SUN1 and SUN2; probably forming respective LINC complexes. Interacts with PLEC (via actin-binding domain). Interacts with DST. Interacts with SYNE1. Interacts (via KASH domain) with TOR1A (ATP-bound); the interaction is required for SYNE3 nuclear envelope localization. The disulfid bond with SUN1 or SUN2 is required for stability of the respective LINC complex under tensile forces. In terms of tissue distribution, ubiquitous.

Its subcellular location is the nucleus outer membrane. It is found in the nucleus envelope. The protein resides in the rough endoplasmic reticulum. Functionally, as a component of the LINC (LInker of Nucleoskeleton and Cytoskeleton) complex involved in the connection between the nuclear lamina and the cytoskeleton. The nucleocytoplasmic interactions established by the LINC complex play an important role in the transmission of mechanical forces across the nuclear envelope and in nuclear movement and positioning. Probable anchoring protein which tethers the nucleus to the cytoskeleton by binding PLEC which can associate with the intermediate filament system. Plays a role in the regulation of aortic epithelial cell morphology, and is required for flow-induced centrosome polarization and directional migration in aortic endothelial cells. This Mus musculus (Mouse) protein is Nesprin-3 (Syne3).